Here is a 322-residue protein sequence, read N- to C-terminus: MHLIIPKDYDPKLSVKETQQAIRYIRETFQDEFGKQLNLSRLSAPMFVEKKTGLNDNLNGVEKPVSFTMQDMGDEQIEIVHSLAKWKRVALKRYGFDMHEGLYTNMNAIRKDEDLDNYHSAYVDQWDWEKVISKEERTVETLKAAVRQIFKVIKHMEHEVWYKFPQAVHHLPDEIHFLTTQELEDMYPDMTPRERENAICKKLGCVFLMQIGWKLDSGERHDGRAPDYDDWKLNGDILFWYEPLDQAIEISSMGIRVDAESMKKQLKDVDAEDRLSLPYHQMILNADVPYTIGGGIGQSRLCMLLLGKAHVGEVQAALWHKP.

This sequence belongs to the class-II aminoacyl-tRNA synthetase family. AsnA subfamily.

The protein localises to the cytoplasm. It catalyses the reaction L-aspartate + NH4(+) + ATP = L-asparagine + AMP + diphosphate + H(+). The protein operates within amino-acid biosynthesis; L-asparagine biosynthesis; L-asparagine from L-aspartate (ammonia route): step 1/1. The polypeptide is Aspartate--ammonia ligase (Lactiplantibacillus plantarum (strain ATCC BAA-793 / NCIMB 8826 / WCFS1) (Lactobacillus plantarum)).